Reading from the N-terminus, the 849-residue chain is Lysine-specific histone demethylase 1 homolog 1 (849 aa).

The tract at residues 1-118 (MEEGSEAQPP…RRRRKKQFPG (118 aa)) is disordered. Composition is skewed to low complexity over residues 34 to 67 (GQAAAAEAMEGEAEGAAAAAGTIEGEAGYAAADA) and 89 to 103 (PTSSAPSATAAVDDS). Over residues 106–115 (ARKRRRRKKQ) the composition is skewed to basic residues. In terms of domain architecture, SWIRM spans 159-260 (ARELDAEALI…FGLAPSVISL (102 aa)). 4 residues coordinate FAD: glutamate 300, arginine 302, arginine 308, and glutamate 688.

Belongs to the flavin monoamine oxidase family. It depends on FAD as a cofactor.

Probable histone demethylase. In Oryza sativa subsp. japonica (Rice), this protein is Lysine-specific histone demethylase 1 homolog 1.